A 263-amino-acid chain; its full sequence is Lens fiber major intrinsic protein (263 aa).

Residues 1 to 9 are Cytoplasmic-facing; that stretch reads MWELRSASF. A helical transmembrane segment spans residues 10–29; the sequence is WRAIFAEFFATLFYVFFGLG. Residues 30–41 lie on the Extracellular side of the membrane; it reads SSLRWAPGPLHV. The chain crosses the membrane as a helical span at residues 42–59; that stretch reads LQVALAFGLALATLVQTV. The Cytoplasmic segment spans residues 60–61; it reads GH. Positions 62-77 form an intramembrane region, discontinuously helical; the sequence is ISGAHVNPAVTFAFLV. The NPA 1 signature appears at 68 to 70; sequence NPA. At 78–82 the chain is on the cytoplasmic side; sequence GSQMS. Residues 83-106 traverse the membrane as a helical segment; sequence LLRAFCYIAAQLLGAVAGAAVLYS. At 107–127 the chain is on the extracellular side; the sequence is VTPPAVRGNLALNTLHAGVSV. The chain crosses the membrane as a helical span at residues 128 to 148; the sequence is GQATTVEIFLTLQFVLCIFAT. The Cytoplasmic portion of the chain corresponds to 149–156; that stretch reads YDERRNGR. Residues 157-175 form a helical membrane-spanning segment; that stretch reads MGSVALAVGFSLTLGHLFG. The Extracellular portion of the chain corresponds to 176-178; the sequence is MYY. An intramembrane region (discontinuously helical) is located at residues 179–193; it reads TGAGMNPARSFAPAI. The NPA 2 signature appears at 184–186; the sequence is NPA. Residues 194-200 lie on the Extracellular side of the membrane; it reads LTRNFSN. The helical transmembrane segment at 201–222 threads the bilayer; sequence HWVYWVGPIIGGGLGSLLYDFL. At 223-263 the chain is on the cytoplasmic side; that stretch reads LFPRLKSVSERLSILKGARPSDSNGQPEGTGEPVELKTQAL. The interaction with CALM stretch occupies residues 227 to 237; it reads LKSVSERLSIL. A phosphoserine mark is found at Ser235, Ser243, and Ser245. The interval 240 to 263 is disordered; it reads ARPSDSNGQPEGTGEPVELKTQAL. At Asn246 the chain carries Deamidated asparagine.

Belongs to the MIP/aquaporin (TC 1.A.8) family. Homotetramer; each monomer provides an independent water pore. Two homotetramers on opposing membranes can dimerize, forming a cell-cell junction. Interacts with CALM; the calcium-calmodulin/CALM complex interacts with the cytoplasmic domains of two aquaporins, leading to channel closure. Interacts with BFSP1 (via C-terminus); prevents calcium-dependent inhibition of the water channel activity. Post-translationally, subject to partial proteolytic cleavage in the eye lens core. Partial proteolysis promotes interactions between tetramers from adjoining membranes. In terms of processing, fatty acylated at Met-1 and Lys-238. The acyl modifications, in decreasing order of ion abundance, are: oleoyl (C18:1) &gt; palmitoyl (C16:0) &gt; stearoyl (C18:0) &gt; eicosenoyl (C20:1) &gt; dihomo-gamma-linolenoyl (C20:3) &gt; palmitoleoyl (C16:1) &gt; eicosadienoyl (C20:2).

Its subcellular location is the cell membrane. It localises to the cell junction. It carries out the reaction H2O(in) = H2O(out). With respect to regulation, the water channel activity is inhibited by calcium through calmodulin/CALM. Its function is as follows. Aquaporins form homotetrameric transmembrane channels, with each monomer independently mediating water transport across the plasma membrane along its osmotic gradient. Specifically expressed in lens fiber cells, this aquaporin is crucial for maintaining lens water homeostasis and transparency. Beyond water permeability, it also acts as a cell-to-cell adhesion molecule, forming thin junctions between lens fiber cells that are essential for maintaining the ordered structure and transparency of the lens. This Rattus norvegicus (Rat) protein is Lens fiber major intrinsic protein.